The primary structure comprises 429 residues: Enolase (429 aa).

Position 163 (Q163) interacts with (2R)-2-phosphoglycerate. Catalysis depends on E205, which acts as the Proton donor. Positions 242, 287, and 314 each coordinate Mg(2+). (2R)-2-phosphoglycerate is bound by residues K339, R368, S369, and K390. Residue K339 is the Proton acceptor of the active site.

Belongs to the enolase family. Mg(2+) serves as cofactor.

The protein localises to the cytoplasm. It is found in the secreted. Its subcellular location is the cell surface. The catalysed reaction is (2R)-2-phosphoglycerate = phosphoenolpyruvate + H2O. The protein operates within carbohydrate degradation; glycolysis; pyruvate from D-glyceraldehyde 3-phosphate: step 4/5. Its function is as follows. Catalyzes the reversible conversion of 2-phosphoglycerate (2-PG) into phosphoenolpyruvate (PEP). It is essential for the degradation of carbohydrates via glycolysis. The chain is Enolase from Cupriavidus pinatubonensis (strain JMP 134 / LMG 1197) (Cupriavidus necator (strain JMP 134)).